Consider the following 172-residue polypeptide: MRRQPAKVAALLLGLLLECTEAKKHCWYFEGLYPTYYICRSYEDCCGSRCCVRALSIQRLWYFWFLLMMGVLFCCGAGFFIRRRMYPPPLIEEPAFNVSYTRQPPNPGPGAQQPGPPYYTDPGGPGMNPVGNSMAMAFQLPPNSPQGSVACPPPPAYCNTPPPPYEQVVKAK.

The first 22 residues, 1–22, serve as a signal peptide directing secretion; sequence MRRQPAKVAALLLGLLLECTEA. The Extracellular portion of the chain corresponds to 23 to 60; sequence KKHCWYFEGLYPTYYICRSYEDCCGSRCCVRALSIQRL. A helical membrane pass occupies residues 61 to 81; sequence WYFWFLLMMGVLFCCGAGFFI. The Cytoplasmic segment spans residues 82 to 172; the sequence is RRRMYPPPLI…PPYEQVVKAK (91 aa). Residues 102–153 are disordered; it reads RQPPNPGPGAQQPGPPYYTDPGGPGMNPVGNSMAMAFQLPPNSPQGSVACPP. Residues 104-119 are compositionally biased toward pro residues; that stretch reads PPNPGPGAQQPGPPYY.

This sequence belongs to the VOPP1/ECOP family. As to quaternary structure, interacts with WWOX (via WW domain).

The protein localises to the cytoplasmic vesicle membrane. The protein resides in the late endosome membrane. It localises to the lysosome membrane. Functionally, increases the transcriptional activity of NFKB1 by facilitating its nuclear translocation, DNA-binding and associated apoptotic response, when overexpressed. May sequester WWOX in lysosomal vesicles and thereby regulate WWOX role as tumor suppressor. The protein is WW domain binding protein VOPP1 (VOPP1) of Pongo abelii (Sumatran orangutan).